A 93-amino-acid chain; its full sequence is Large ribosomal subunit protein bL31B (93 aa).

Belongs to the bacterial ribosomal protein bL31 family. Type B subfamily. As to quaternary structure, part of the 50S ribosomal subunit.

The sequence is that of Large ribosomal subunit protein bL31B from Pseudomonas syringae pv. syringae (strain B728a).